The primary structure comprises 298 residues: ATP synthase gamma chain (298 aa).

The protein belongs to the ATPase gamma chain family. In terms of assembly, F-type ATPases have 2 components, CF(1) - the catalytic core - and CF(0) - the membrane proton channel. CF(1) has five subunits: alpha(3), beta(3), gamma(1), delta(1), epsilon(1). CF(0) has three main subunits: a, b and c.

Its subcellular location is the cell inner membrane. Its function is as follows. Produces ATP from ADP in the presence of a proton gradient across the membrane. The gamma chain is believed to be important in regulating ATPase activity and the flow of protons through the CF(0) complex. In Granulibacter bethesdensis (strain ATCC BAA-1260 / CGDNIH1), this protein is ATP synthase gamma chain.